The primary structure comprises 436 residues: MSDRQQVTNAKGERIAIVAGLRTPFAKQATAFHGVSALDMGKMVVNELLARSELDPKLIEQLVYGQVVQMPAAPNIAREIVLGTGMDVSTDAYSVTRACATSFQSAVNVAESIMTGNIEIGIAGGADSSSVLPIGVSKKLAHALVDLNKARSFGQKLQIFRRLGIKDLLPVPPAVAEYSTGLSMGQTAEQMAKTYNISRADQDALAHRSHTLASETWASGHLRDEVMVAHVPPYKQFIERDNNIRENSDLSSYAKLRPAFDKKHGSVTAANSTPLTDGASAIILMSEGRAKALGYQPIGYIKSYAFTAIDVWQDMLMGPSYATPLALKRAGMELEDLTLIEMHEAFAAQTLANMQMFASKKFAEEKLGRNRAIGEIDMSKFNVLGGSLAYGHPFAATGTRLITQVCRELKRRGGGTGLATACAAGGLGAAMIVEVE.

The active-site Acyl-thioester intermediate is Cys99. Active-site proton acceptor residues include His392 and Cys422.

Belongs to the thiolase-like superfamily. Thiolase family. As to quaternary structure, heterotetramer of two alpha chains (FadJ) and two beta chains (FadI).

The protein localises to the cytoplasm. It carries out the reaction an acyl-CoA + acetyl-CoA = a 3-oxoacyl-CoA + CoA. It participates in lipid metabolism; fatty acid beta-oxidation. Functionally, catalyzes the final step of fatty acid oxidation in which acetyl-CoA is released and the CoA ester of a fatty acid two carbons shorter is formed. The chain is 3-ketoacyl-CoA thiolase from Shewanella sp. (strain ANA-3).